Reading from the N-terminus, the 165-residue chain is Small ribosomal subunit protein uS5 (165 aa).

The S5 DRBM domain occupies 10–73; sequence LKEKVVFINR…EDAKKHLVEV (64 aa).

It belongs to the universal ribosomal protein uS5 family. Part of the 30S ribosomal subunit. Contacts proteins S4 and S8.

Functionally, with S4 and S12 plays an important role in translational accuracy. Located at the back of the 30S subunit body where it stabilizes the conformation of the head with respect to the body. This is Small ribosomal subunit protein uS5 from Clostridium novyi (strain NT).